The sequence spans 488 residues: Probable glycine dehydrogenase (decarboxylating) subunit 2 (488 aa).

K264 carries the N6-(pyridoxal phosphate)lysine modification.

The protein belongs to the GcvP family. C-terminal subunit subfamily. As to quaternary structure, the glycine cleavage system is composed of four proteins: P, T, L and H. In this organism, the P 'protein' is a heterodimer of two subunits. Requires pyridoxal 5'-phosphate as cofactor.

The catalysed reaction is N(6)-[(R)-lipoyl]-L-lysyl-[glycine-cleavage complex H protein] + glycine + H(+) = N(6)-[(R)-S(8)-aminomethyldihydrolipoyl]-L-lysyl-[glycine-cleavage complex H protein] + CO2. In terms of biological role, the glycine cleavage system catalyzes the degradation of glycine. The P protein binds the alpha-amino group of glycine through its pyridoxal phosphate cofactor; CO(2) is released and the remaining methylamine moiety is then transferred to the lipoamide cofactor of the H protein. The sequence is that of Probable glycine dehydrogenase (decarboxylating) subunit 2 from Methylococcus capsulatus (strain ATCC 33009 / NCIMB 11132 / Bath).